Reading from the N-terminus, the 547-residue chain is Undecaprenyl phosphate-alpha-4-amino-4-deoxy-L-arabinose arabinosyl transferase (547 aa).

10 consecutive transmembrane segments (helical) span residues 83–103, 111–131, 174–194, 205–225, 253–273, 286–306, 311–331, 346–366, 378–398, and 408–428; these read FASA…ALQL, FLAS…TYSV, FLTK…PYVI, FGPL…IAVH, APFW…LGLL, ISPE…FFSI, LLTY…ANAV, AWLN…LAFS, GALA…FIQL, and SALC…QSLI.

This sequence belongs to the glycosyltransferase 83 family.

It localises to the cell inner membrane. The enzyme catalyses 4-amino-4-deoxy-alpha-L-arabinopyranosyl di-trans,octa-cis-undecaprenyl phosphate + lipid IVA = lipid IIA + di-trans,octa-cis-undecaprenyl phosphate.. The protein operates within lipopolysaccharide metabolism; 4-amino-4-deoxy-beta-L-arabinose-lipid A biosynthesis. In terms of biological role, catalyzes the transfer of the L-Ara4N moiety of the glycolipid undecaprenyl phosphate-alpha-L-Ara4N to lipid A. The modified arabinose is attached to lipid A and is required for resistance to polymyxin and cationic antimicrobial peptides. The polypeptide is Undecaprenyl phosphate-alpha-4-amino-4-deoxy-L-arabinose arabinosyl transferase (Aeromonas hydrophila subsp. hydrophila (strain ATCC 7966 / DSM 30187 / BCRC 13018 / CCUG 14551 / JCM 1027 / KCTC 2358 / NCIMB 9240 / NCTC 8049)).